A 470-amino-acid polypeptide reads, in one-letter code: UTP--glucose-1-phosphate uridylyltransferase 1 (470 aa).

Alanine 2 is modified (N-acetylalanine). UTP-binding positions include leucine 86–glycine 89, lysine 100, glutamine 163, and glycine 192. Residue glycine 88–glycine 89 participates in substrate binding. Substrate-binding positions include histidine 193 and asparagine 221–aspartate 223. Aspartate 223 and lysine 361 together coordinate UTP.

It belongs to the UDPGP type 1 family. As to expression, expressed in roots, rosette leaves, cauline leaves, stems, flowers and siliques.

The protein localises to the cytoplasm. The catalysed reaction is alpha-D-glucose 1-phosphate + UTP + H(+) = UDP-alpha-D-glucose + diphosphate. In terms of biological role, converts glucose 1-phosphate to UDP-glucose, which is the major glycosyl donor for polysaccharides. Acts redundantly with UGP2 and is essential for the synthesis of sucrose, starch and cell wall, and callose deposition. Involved in the regulation of the programmed cell death (PCD) induced by the fungal toxin fumonisin B1 (FB1). This Arabidopsis thaliana (Mouse-ear cress) protein is UTP--glucose-1-phosphate uridylyltransferase 1.